We begin with the raw amino-acid sequence, 378 residues long: Succinyl-diaminopimelate desuccinylase (378 aa).

His67 is a Zn(2+) binding site. Asp69 is an active-site residue. Asp100 provides a ligand contact to Zn(2+). Residue Glu134 is the Proton acceptor of the active site. Zn(2+) is bound by residues Glu135, Glu163, and His349.

Belongs to the peptidase M20A family. DapE subfamily. In terms of assembly, homodimer. Zn(2+) serves as cofactor. Co(2+) is required as a cofactor.

It catalyses the reaction N-succinyl-(2S,6S)-2,6-diaminopimelate + H2O = (2S,6S)-2,6-diaminopimelate + succinate. It functions in the pathway amino-acid biosynthesis; L-lysine biosynthesis via DAP pathway; LL-2,6-diaminopimelate from (S)-tetrahydrodipicolinate (succinylase route): step 3/3. Catalyzes the hydrolysis of N-succinyl-L,L-diaminopimelic acid (SDAP), forming succinate and LL-2,6-diaminopimelate (DAP), an intermediate involved in the bacterial biosynthesis of lysine and meso-diaminopimelic acid, an essential component of bacterial cell walls. The polypeptide is Succinyl-diaminopimelate desuccinylase (Nitrosospira multiformis (strain ATCC 25196 / NCIMB 11849 / C 71)).